The chain runs to 498 residues: Protein spinster homolog 3 (498 aa).

Helical transmembrane passes span 49–71, 87–107, 114–134, 148–168, 175–195, 207–227, 260–280, 309–329, 343–363, 373–393, 407–427, and 451–471; these read IAVA…IAGV, GLLQ…FGYL, KLIM…SSFV, LVGT…GDLF, LMIS…YIIG, WALR…VFLI, FVWS…LAFW, YIFG…GTCI, LICA…IVLA, FIAI…DILL, LQIM…IGAI, and LLCP…SLYI.

This sequence belongs to the major facilitator superfamily. Spinster (TC 2.A.1.49) family.

It is found in the membrane. Its function is as follows. Sphingolipid transporter. The sequence is that of Protein spinster homolog 3 (spns3) from Danio rerio (Zebrafish).